Reading from the N-terminus, the 165-residue chain is Nascent polypeptide-associated complex subunit beta (165 aa).

2 disordered regions span residues 1–34 (MDQAKLARMQASVRIGGKGTPRRKVKKVHKTSGA) and 133–165 (QNMQKNQAGEKKDDDEDDIPDLVEGENFEKSVD). The span at 20–30 (TPRRKVKKVHK) shows a compositional bias: basic residues. The NAC-A/B domain occupies 33 to 110 (GADDKKLQAT…GEEKELTELV (78 aa)). Over residues 145–158 (DDDEDDIPDLVEGE) the composition is skewed to acidic residues.

Belongs to the NAC-beta family. As to quaternary structure, part of the nascent polypeptide-associated complex (NAC), consisting of egd2 and egd1. NAC associates with ribosomes via egd1.

The protein resides in the cytoplasm. It is found in the nucleus. Functionally, component of the nascent polypeptide-associated complex (NAC), a dynamic component of the ribosomal exit tunnel, protecting the emerging polypeptides from interaction with other cytoplasmic proteins to ensure appropriate nascent protein targeting. The NAC complex also promotes mitochondrial protein import by enhancing productive ribosome interactions with the outer mitochondrial membrane and blocks the inappropriate interaction of ribosomes translating non-secretory nascent polypeptides with translocation sites in the membrane of the endoplasmic reticulum. EGD1 may act as a transcription factor that exert a negative effect on the expression of several genes that are transcribed by RNA polymerase II. The sequence is that of Nascent polypeptide-associated complex subunit beta (egd1) from Emericella nidulans (strain FGSC A4 / ATCC 38163 / CBS 112.46 / NRRL 194 / M139) (Aspergillus nidulans).